The chain runs to 270 residues: Putative hydro-lyase Noca_0093 (270 aa).

It belongs to the D-glutamate cyclase family.

This is Putative hydro-lyase Noca_0093 from Nocardioides sp. (strain ATCC BAA-499 / JS614).